We begin with the raw amino-acid sequence, 71 residues long: UPF0435 protein RBAM_008100 (71 aa).

It belongs to the UPF0435 family.

The chain is UPF0435 protein RBAM_008100 from Bacillus velezensis (strain DSM 23117 / BGSC 10A6 / LMG 26770 / FZB42) (Bacillus amyloliquefaciens subsp. plantarum).